A 260-amino-acid chain; its full sequence is Flavin-dependent thymidylate synthase (260 aa).

The region spanning Ile2–Asn203 is the ThyX domain. FAD contacts are provided by residues Ser56, Arg80–Arg82, and Gln88. Residues Gln77–Arg80, Gln88–Arg92, and Arg142 each bind dUMP. Positions Arg80–Ser90 match the ThyX motif motif. FAD contacts are provided by residues Asn158–Arg160 and Asn164. Position 169 (Arg169) interacts with dUMP. The active-site Involved in ionization of N3 of dUMP, leading to its activation is the Arg169.

Belongs to the thymidylate synthase ThyX family. In terms of assembly, homotetramer. Requires FAD as cofactor.

It carries out the reaction dUMP + (6R)-5,10-methylene-5,6,7,8-tetrahydrofolate + NADPH + H(+) = dTMP + (6S)-5,6,7,8-tetrahydrofolate + NADP(+). Its pathway is pyrimidine metabolism; dTTP biosynthesis. In terms of biological role, catalyzes the reductive methylation of 2'-deoxyuridine-5'-monophosphate (dUMP) to 2'-deoxythymidine-5'-monophosphate (dTMP) while utilizing 5,10-methylenetetrahydrofolate (mTHF) as the methyl donor, and NADPH and FADH(2) as the reductant. The protein is Flavin-dependent thymidylate synthase of Saccharolobus solfataricus (strain ATCC 35092 / DSM 1617 / JCM 11322 / P2) (Sulfolobus solfataricus).